We begin with the raw amino-acid sequence, 86 residues long: Chymotrypsin inhibitor (86 aa).

An N-terminal signal peptide occupies residues 1 to 16 (MKTLCIFLVLVVAVAA). Intrachain disulfides connect C26/C58, C38/C50, C42/C82, and C60/C76. The region spanning 26 to 82 (CPPNKEFGSYGDCPPSCLKNPPNFCTLKLNYGCKCKEGYVLTRYQDYESDCIKPEEC) is the TIL domain.

Belongs to the serine protease inhibitor-like (TIL domain-containing) family. Only expressed in fat body.

It localises to the secreted. Serine protease inhibitor that inhibits chymotrypsin (IC(50)=34.13 nM, Ki=49.85 nM), microbial serine proteases (subtilisin A (IC(50)=21.31 nM, Ki=20.51 nM) and proteinase K (IC(50)=52.56 nM, Ki=65.42 nM)), as well as human neutrophil elastase (IC(50)=11.54 nM, Ki=8.74 nM), and porcine pancreatic elastase (IC(50)=19.07 nM, Ki=11.32 nM). The polypeptide is Chymotrypsin inhibitor (Araneus ventricosus (Orbweaver spider)).